The chain runs to 82 residues: UPF0291 protein LVIS_1359 (82 aa).

The protein belongs to the UPF0291 family.

The protein resides in the cytoplasm. In Levilactobacillus brevis (strain ATCC 367 / BCRC 12310 / CIP 105137 / JCM 1170 / LMG 11437 / NCIMB 947 / NCTC 947) (Lactobacillus brevis), this protein is UPF0291 protein LVIS_1359.